A 167-amino-acid polypeptide reads, in one-letter code: Leptin (167 aa).

Positions 1-21 (MRCGPLCRFLWLWPYLSYIEA) are cleaved as a signal peptide. Cys117 and Cys167 are oxidised to a cystine.

This sequence belongs to the leptin family.

The protein localises to the secreted. Key player in the regulation of energy balance and body weight control. Once released into the circulation, has central and peripheral effects by binding LEPR, found in many tissues, which results in the activation of several major signaling pathways. In the hypothalamus, acts as an appetite-regulating factor that induces a decrease in food intake and an increase in energy consumption by inducing anorexinogenic factors and suppressing orexigenic neuropeptides, also regulates bone mass and secretion of hypothalamo-pituitary-adrenal hormones. In the periphery, increases basal metabolism, influences reproductive function, regulates pancreatic beta-cell function and insulin secretion, is pro-angiogenic for endothelial cell and affects innate and adaptive immunity. In the arcuate nucleus of the hypothalamus, activates by depolarization POMC neurons inducing FOS and SOCS3 expression to release anorexigenic peptides and inhibits by hyperpolarization NPY neurons inducing SOCS3 with a consequent reduction on release of orexigenic peptides. In addition to its known satiety inducing effect, has a modulatory role in nutrient absorption. In the intestine, reduces glucose absorption by enterocytes by activating PKC and leading to a sequential activation of p38, PI3K and ERK signaling pathways which exerts an inhibitory effect on glucose absorption. Acts as a growth factor on certain tissues, through the activation of different signaling pathways increases expression of genes involved in cell cycle regulation such as CCND1, via JAK2-STAT3 pathway, or VEGFA, via MAPK1/3 and PI3K-AKT1 pathways. May also play an apoptotic role via JAK2-STAT3 pathway and up-regulation of BIRC5 expression. Pro-angiogenic, has mitogenic activity on vascular endothelial cells and plays a role in matrix remodeling by regulating the expression of matrix metalloproteinases (MMPs) and tissue inhibitors of metalloproteinases (TIMPs). In innate immunity, modulates the activity and function of neutrophils by increasing chemotaxis and the secretion of oxygen radicals. Increases phagocytosis by macrophages and enhances secretion of pro-inflammatory mediators. Increases cytotoxic ability of NK cells. Plays a pro-inflammatory role, in synergy with IL1B, by inducing NOS2 which promotes the production of IL6, IL8 and Prostaglandin E2, through a signaling pathway that involves JAK2, PI3K, MAP2K1/MEK1 and MAPK14/p38. In adaptive immunity, promotes the switch of memory T-cells towards T helper-1 cell immune responses. Increases CD4(+)CD25(-) T-cell proliferation and reduces autophagy during TCR (T-cell receptor) stimulation, through MTOR signaling pathway activation and BCL2 up-regulation. The polypeptide is Leptin (LEP) (Ursus thibetanus (Asiatic black bear)).